Here is an 806-residue protein sequence, read N- to C-terminus: mRNA 3'-end-processing protein RNA14 (806 aa).

The disordered stretch occupies residues 1–187 (MSDDYDPTAV…SGPDNNKRKR (187 aa)). Basic and acidic residues-rich tracts occupy residues 33-43 (AAAKDPAHNEE) and 60-107 (QGDE…KPEN). Residues 108–118 (PSEEVAEDDDY) are compositionally biased toward acidic residues. Residues 132–142 (AGGGSVGGTGI) are compositionally biased toward gly residues. Residues 170–181 (SSTSNNNNSGPD) are compositionally biased toward low complexity. HAT repeat units lie at residues 221-253 (EKLD…LEMD), 255-286 (GEFK…YVRR), 299-334 (EART…FIKS), 345-378 (QKND…FEYS), and 404-440 (VLEN…WEKS). The disordered stretch occupies residues 729–770 (KPKSRTDEDSDSERPSKRARRTSHGNDQGDKMEPFNLPQKID). Basic and acidic residues predominate over residues 732-744 (SRTDEDSDSERPS).

It is found in the nucleus. The protein localises to the cytoplasm. Its function is as follows. Component of the cleavage factor IA (CFIA) complex, which is involved in the endonucleolytic cleavage during polyadenylation-dependent pre-mRNA 3'-end formation. The chain is mRNA 3'-end-processing protein RNA14 (RNA14) from Yarrowia lipolytica (strain CLIB 122 / E 150) (Yeast).